Consider the following 195-residue polypeptide: Thymidine kinase (195 aa).

ATP-binding positions include 9-16 (STMNAGKS) and 87-90 (DEAQ). The active-site Proton acceptor is the glutamate 88. Positions 145, 147, 182, and 185 each coordinate Zn(2+).

It belongs to the thymidine kinase family. In terms of assembly, homotetramer.

It localises to the cytoplasm. The catalysed reaction is thymidine + ATP = dTMP + ADP + H(+). The protein is Thymidine kinase of Mannheimia succiniciproducens (strain KCTC 0769BP / MBEL55E).